Consider the following 64-residue polypeptide: Beta-toxin Tf1 (64 aa).

The LCN-type CS-alpha/beta domain occupies 1–62 (KEGYLMDHEG…VWERATNRCG (62 aa)). 4 disulfides stabilise this stretch: cysteine 11–cysteine 61, cysteine 15–cysteine 37, cysteine 23–cysteine 42, and cysteine 27–cysteine 44. Cysteine 61 is modified (cysteine amide).

It belongs to the long (4 C-C) scorpion toxin superfamily. Sodium channel inhibitor family. Beta subfamily. As to expression, expressed by the venom gland.

Its subcellular location is the secreted. Its function is as follows. Beta toxins bind voltage-independently at site-4 of sodium channels (Nav) and shift the voltage of activation toward more negative potentials thereby affecting sodium channel activation and promoting spontaneous and repetitive firing. This is Beta-toxin Tf1 from Tityus fasciolatus (Central Brazilian scorpion).